The chain runs to 189 residues: Peptidyl-tRNA hydrolase (189 aa).

Tyr-14 is a tRNA binding site. Residue His-19 is the Proton acceptor of the active site. TRNA contacts are provided by Tyr-64, Asn-66, and Asn-112.

It belongs to the PTH family. As to quaternary structure, monomer.

The protein localises to the cytoplasm. The catalysed reaction is an N-acyl-L-alpha-aminoacyl-tRNA + H2O = an N-acyl-L-amino acid + a tRNA + H(+). Hydrolyzes ribosome-free peptidyl-tRNAs (with 1 or more amino acids incorporated), which drop off the ribosome during protein synthesis, or as a result of ribosome stalling. In terms of biological role, catalyzes the release of premature peptidyl moieties from peptidyl-tRNA molecules trapped in stalled 50S ribosomal subunits, and thus maintains levels of free tRNAs and 50S ribosomes. The polypeptide is Peptidyl-tRNA hydrolase (Dehalococcoides mccartyi (strain ATCC BAA-2266 / KCTC 15142 / 195) (Dehalococcoides ethenogenes (strain 195))).